Consider the following 89-residue polypeptide: Small ribosomal subunit protein uS15 (89 aa).

This sequence belongs to the universal ribosomal protein uS15 family. As to quaternary structure, part of the 30S ribosomal subunit. Forms a bridge to the 50S subunit in the 70S ribosome, contacting the 23S rRNA.

Its function is as follows. One of the primary rRNA binding proteins, it binds directly to 16S rRNA where it helps nucleate assembly of the platform of the 30S subunit by binding and bridging several RNA helices of the 16S rRNA. Functionally, forms an intersubunit bridge (bridge B4) with the 23S rRNA of the 50S subunit in the ribosome. The polypeptide is Small ribosomal subunit protein uS15 (Photorhabdus laumondii subsp. laumondii (strain DSM 15139 / CIP 105565 / TT01) (Photorhabdus luminescens subsp. laumondii)).